We begin with the raw amino-acid sequence, 223 residues long: DNA mismatch repair protein MutH (223 aa).

Belongs to the MutH family.

Its subcellular location is the cytoplasm. Functionally, sequence-specific endonuclease that cleaves unmethylated GATC sequences. It is involved in DNA mismatch repair. The protein is DNA mismatch repair protein MutH of Haemophilus influenzae (strain ATCC 51907 / DSM 11121 / KW20 / Rd).